The sequence spans 342 residues: Cystein proteinase inhibitor protein salarin (342 aa).

A signal peptide spans 1-19 (MKSLVLLLLVAVTVSSVVS). A glycan (N-linked (GlcNAc) asparagine) is linked at Asn153. O-linked (GlcNAc) threonine glycosylation is present at Thr184.

N-glycosylated, with sialylated biantennary complex-type glycans. Post-translationally, O-glycosylated, with sialylated oligosaccharides.

The protein resides in the cytoplasm. It is found in the vacuole. Its function is as follows. Inhibits papain and ficin (cysteine proteinases) but not trypsin (a serine proteinase). The protein is Cystein proteinase inhibitor protein salarin (salarin) of Salvelinus alpinus (Arctic char).